The primary structure comprises 820 residues: Trimethylamine-N-oxide reductase (820 aa).

Residues 1-33 constitute a signal peptide (tat-type signal); it reads MAITRRSFLKGVATTSAASVIGPSLLASASANA. Serine 179 contributes to the Mo-bis(molybdopterin guanine dinucleotide) binding site.

This sequence belongs to the prokaryotic molybdopterin-containing oxidoreductase family. It depends on Mo-bis(molybdopterin guanine dinucleotide) as a cofactor. In terms of processing, predicted to be exported by the Tat system. The position of the signal peptide cleavage has not been experimentally proven.

The protein resides in the periplasm. The catalysed reaction is trimethylamine + 2 Fe(III)-[cytochrome c] + H2O = trimethylamine N-oxide + 2 Fe(II)-[cytochrome c] + 3 H(+). Its function is as follows. Reduces trimethylamine-N-oxide (TMAO) into trimethylamine; an anaerobic reaction coupled to energy-yielding reactions. This Vibrio vulnificus (strain YJ016) protein is Trimethylamine-N-oxide reductase (torA).